The chain runs to 76 residues: uncharacterized protein (76 aa).

This is an uncharacterized protein from Bacillus subtilis (strain 168).